Consider the following 249-residue polypeptide: Segregation and condensation protein A (249 aa).

The protein belongs to the ScpA family. As to quaternary structure, component of a cohesin-like complex composed of ScpA, ScpB and the Smc homodimer, in which ScpA and ScpB bind to the head domain of Smc. The presence of the three proteins is required for the association of the complex with DNA.

The protein resides in the cytoplasm. Participates in chromosomal partition during cell division. May act via the formation of a condensin-like complex containing Smc and ScpB that pull DNA away from mid-cell into both cell halves. The sequence is that of Segregation and condensation protein A from Listeria innocua serovar 6a (strain ATCC BAA-680 / CLIP 11262).